Consider the following 1166-residue polypeptide: Folliculin-interacting protein 1 (1166 aa).

Residues 37-478 (FDPSQIRLIV…TVMPNGQPPI (442 aa)) enclose the uDENN FNIP1/2-type domain. S220, S230, S232, and S261 each carry phosphoserine; by AMPK. T294 bears the Phosphothreonine mark. A Phosphoserine modification is found at S296. Residues 486–1092 (SSQSVDMLAK…VSNLLHSTLQ (607 aa)) form the cDENN FNIP1/2-type domain. S593 is modified (phosphoserine; by AMPK). S594 carries the post-translational modification Phosphoserine. C608 and C610 together coordinate Zn(2+). The Cys degron signature appears at 608 to 615 (CNCKYCSH). A KY-finger region spans residues 611–612 (KY). Zn(2+) is bound by residues C613 and H615. 2 positions are modified to phosphoserine: S760 and S763. 2 disordered regions span residues 781 to 817 (TKPL…VSEE) and 912 to 956 (LVPH…HDMT). Composition is skewed to basic and acidic residues over residues 783–805 (PLKE…KDQS) and 915–925 (HGDKESSDKKI). Positions 929–1166 (TEWDIPRNES…HSPYVAQILL (238 aa)) are interaction with HSP90AA1. A Phosphoserine; alternate; by CK2 modification is found at S938. S938 carries O-linked (GlcNAc) serine; alternate glycosylation. Residues S939, S941, S946, and S948 each carry the phosphoserine; by CK2 modification. Residues 1102–1157 (FCVMHLEDRLQELYFKSKMLSEYLRGQMRVHVKELGVVLGIESSDLPLLAAVASTH) form the dDENN FNIP1/2-type domain. K1119 participates in a covalent cross-link: Glycyl lysine isopeptide (Lys-Gly) (interchain with G-Cter in ubiquitin).

It belongs to the FNIP family. As to quaternary structure, homodimer and homomultimer. Heterodimer and heteromultimer with FNIP2. Interacts with FLCN (via C-terminus). Component of the lysosomal folliculin complex (LFC), composed of FLCN, FNIP1 (or FNIP2), RagA/RRAGA or RagB/RRAGB GDP-bound, RagC/RRAGC or RagD/RRAGD GTP-bound, and Ragulator. Interacts with HSPCA and with the PRKAA1, PRKAB1 and PRKAG1 subunits of 5'-AMP-activated protein kinase (AMPK). Phosphorylated FLCN and AMPK are preferentially bound. Interacts with HSP70, STIP1, PTGES3, CDC37, BRAF, GCR and CDK4. Interacts with HSP90AA1; the interaction inhibits HSP90AA1 ATPase activity. Interacts with ATP2A2. Post-translationally, phosphorylated by AMPK in response to energetic stress. Phosphorylation by AMPK in response to mitochondrial damage promotes inactivation of the non-canonical mTORC1 signaling, nuclear translocation of TFEB and TFE3, inducing transcription of lysosomal or autophagy genes. Sequential phosphorylation by CK2 promotes its gradual interaction with HSP90AA1/Hsp90. Priming phosphorylation at Ser-938 is followed by relay phosphorylation at Ser-939, Ser-941, Ser-946 and Ser-948, promoting its gradual interaction with HSP90AA1/Hsp90. This leads to incremental inhibition of HSP90AA1/Hsp90 ATPase activity and gradual activation of both kinase and non-kinase clients. Dephosphorylated by protein phosphatase 5 (PP5), promoting glycosylation by OGT. GlcNAcylation at Ser-938 by OGT following dephosphorylation by protein phosphatase 5 (PP5) promotes ubiquitination and degradation by the proteasome. In terms of processing, ubiquitinated through 'Lys-11' linkage of ubiquitin moieties at Lys-1119 following glycosylation by OGT, leading to its degradation by the proteasome. Ubiquitinated by the CRL2(FEM1B) complex in response to reductive stress: reductive stress causes reduction of the conserved Cys degron in FNIP1, followed by zinc-binding, zinc acting as a molecular glue for recognition by the CRL2(FEM1B) complex. Ubiquitination leads to FNIP1 degradation, and activation of mitochondria to recalibrate reactive oxygen species (ROS). Post-translationally, oxidation of the Cys degron in normal conditions promotes its stabilization by preventing recognition and ubiquitination by the CRL2(FEM1B) complex. In terms of tissue distribution, strong expression is found in the heart, liver placenta, muscle, nasal mucosa, salivary gland and uvula and moderate expression in kidney and lung. Higher levels detected in clear cell renal cell carcinoma (RCC) and chromophobe RCC than in normal kidney tissue. Expressed in peripheral blood mononuclear cells.

The protein resides in the lysosome membrane. It is found in the cytoplasm. The protein localises to the cytosol. Binding partner of the GTPase-activating protein FLCN: involved in the cellular response to amino acid availability by regulating the non-canonical mTORC1 signaling cascade controlling the MiT/TFE factors TFEB and TFE3. Required to promote FLCN recruitment to lysosomes and interaction with Rag GTPases, leading to activation of the non-canonical mTORC1 signaling. In low-amino acid conditions, component of the lysosomal folliculin complex (LFC) on the membrane of lysosomes, which inhibits the GTPase-activating activity of FLCN, thereby inactivating mTORC1 and promoting nuclear translocation of TFEB and TFE3. Upon amino acid restimulation, disassembly of the LFC complex liberates the GTPase-activating activity of FLCN, leading to activation of mTORC1 and subsequent inactivation of TFEB and TFE3. Together with FLCN, regulates autophagy: following phosphorylation by ULK1, interacts with GABARAP and promotes autophagy. In addition to its role in mTORC1 signaling, also acts as a co-chaperone of HSP90AA1/Hsp90: following gradual phosphorylation by CK2, inhibits the ATPase activity of HSP90AA1/Hsp90, leading to activate both kinase and non-kinase client proteins of HSP90AA1/Hsp90. Acts as a scaffold to load client protein FLCN onto HSP90AA1/Hsp90. Competes with the activating co-chaperone AHSA1 for binding to HSP90AA1, thereby providing a reciprocal regulatory mechanism for chaperoning of client proteins. Also acts as a core component of the reductive stress response by inhibiting activation of mitochondria in normal conditions: in response to reductive stress, the conserved Cys degron is reduced, leading to recognition and polyubiquitylation by the CRL2(FEM1B) complex, followed by proteasomal. Required for B-cell development. The polypeptide is Folliculin-interacting protein 1 (Homo sapiens (Human)).